The following is a 271-amino-acid chain: uncharacterized protein (271 aa).

The tract at residues 233-261 (VEPDPNRFSEPVDQPTLVEEGKEARRTER) is disordered. Residues 251-261 (EEGKEARRTER) are compositionally biased toward basic and acidic residues.

Functionally, may be involved in swimming motility. This is an uncharacterized protein from Haloferax volcanii (strain ATCC 29605 / DSM 3757 / JCM 8879 / NBRC 14742 / NCIMB 2012 / VKM B-1768 / DS2) (Halobacterium volcanii).